A 308-amino-acid polypeptide reads, in one-letter code: tRNA pseudouridine synthase B (308 aa).

Aspartate 46 (nucleophile) is an active-site residue.

The protein belongs to the pseudouridine synthase TruB family. Type 1 subfamily.

The enzyme catalyses uridine(55) in tRNA = pseudouridine(55) in tRNA. Responsible for synthesis of pseudouridine from uracil-55 in the psi GC loop of transfer RNAs. This is tRNA pseudouridine synthase B from Marinomonas sp. (strain MWYL1).